We begin with the raw amino-acid sequence, 158 residues long: MERLIFVSFGLLVVILSLSGTGADFDCIPGWSAYDRYCYQAFSKPKNWEDAESFCEEGVKTSHLVSIESSGEGDFVAQLVAEKIKTSFQYVWIGLRIQNKEQQCRSEWSDASSVNYENLVKQFSKKCYALKKGTELRTWFNVYCGTENPFVCKYTPEC.

The N-terminal stretch at 1 to 23 is a signal peptide; that stretch reads MERLIFVSFGLLVVILSLSGTGA. Intrachain disulfides connect C27-C38, C55-C152, and C127-C144. The C-type lectin domain occupies 34-153; that stretch reads YDRYCYQAFS…CGTENPFVCK (120 aa).

It belongs to the snaclec family. Tetramer of heterodimers of alpha and beta subunits (alphabeta)(4); disulfide-linked. Expressed by the venom gland.

The protein resides in the secreted. Strong platelet aggregation inhibitor. Binds specifically to platelet glycoprotein Ibalpha (GP1BA) with high affinity and inhibits vWF-dependent platelet aggregation. Has also been observed to induce small agglutinates in washed platelets by binding to GPIb. This chain is Snaclec flavocetin-A subunit alpha, found in Protobothrops flavoviridis (Habu).